The sequence spans 238 residues: Tetraspanin-4 (238 aa).

The Cytoplasmic segment spans residues 1–13 (MARACLQAVKYLM). The chain crosses the membrane as a helical span at residues 14 to 34 (FAFNLLFWLGGCGVLGVGIWL). Over 35 to 55 (AATQGSFATLSSSFPSLSAAN) the chain is Extracellular. A helical transmembrane segment spans residues 56–76 (LLIITGAFVMAIGFVGCLGAI). Over 77–85 (KENKCLLLT) the chain is Cytoplasmic. A helical membrane pass occupies residues 86-106 (FFLLLLLVFLLEATIAILFFA). The Extracellular segment spans residues 107–201 (YTDKIDRYAQ…ETVKVWLQEN (95 aa)). N-linked (GlcNAc...) asparagine glycans are attached at residues asparagine 152 and asparagine 161. The helical transmembrane segment at 202-222 (LLAVGIFGLCTALVQILGLTF) threads the bilayer. Over 223–238 (AMTMYCQVVKADTYCA) the chain is Cytoplasmic.

It belongs to the tetraspanin (TM4SF) family. In terms of assembly, forms a complex with integrins. Interacts with HRH4. As to expression, expressed in multiple tissues but is absent in brain, lymphoid cells, and platelets.

Its subcellular location is the cell membrane. Functionally, structural component of specialized membrane microdomains known as tetraspanin-enriched microdomains (TERMs), which act as platforms for receptor clustering and signaling. Plays an essential role in migrasome formation and migration on retracting fibers at the rear end of migrating cells. Migrasomes are cellular organelles that form as large vesicle-like structures on retraction fibers of migrating cells. Mechanistically, acts as a membrane curvature sensor and participates in stabilizing the migrasome structure in a late stage of biogenesis. May also play a regulatory role for the histamine H4 receptor/HRH4 without affecting histamine binding to HRH4 or signaling. This is Tetraspanin-4 (TSPAN4) from Homo sapiens (Human).